The sequence spans 386 residues: Skeletal aspartic acid-rich protein 1 (386 aa).

The N-terminal stretch at 1 to 24 (MAFVSCFHLRLLFLCLALFMAAEC) is a signal peptide. 2 disordered regions span residues 33-145 (VDSD…PFSL) and 244-291 (EVTD…DCPH). Positions 63-107 (YDASDDNDNDNDDDDNNDNDNDNDDDNDVDRDNDNDDDDFDDSND) are enriched in acidic residues. 2 stretches are compositionally biased toward basic and acidic residues: residues 133–142 (HSVESFEDRP) and 244–265 (EVTDEERKSQNKPAVCKDKDTP). Acidic residues predominate over residues 266 to 288 (DTDSDPDDSSDNANDGDDDDDDD).

As to expression, component of the acid-insoluble and acid-soluble organic matrix of the aragonitic skeleton (at protein level).

The protein localises to the secreted. This is Skeletal aspartic acid-rich protein 1 from Acropora millepora (Staghorn coral).